Consider the following 643-residue polypeptide: Thioredoxin reductase 3 (643 aa).

Residues 1 to 53 are disordered; the sequence is MERSPPQSPGPGKAGDAPNRRSGHVRGARVLSPPGRRARLSSPGPSRSSEARE. Arg-26 bears the Asymmetric dimethylarginine; alternate mark. Omega-N-methylarginine; alternate is present on Arg-26. A phosphoserine mark is found at Ser-41 and Ser-42. The region spanning 56–156 is the Glutaredoxin domain; sequence RRHLVGLIER…KLLQEDLAYD (101 aa). 158 to 187 lines the FAD pocket; the sequence is DLIIIGGGSGGLSCAKEAAILGKKVMVLDF. Residues Cys-203 and Cys-208 are joined by a disulfide bond. Lys-379 carries the N6-succinyllysine modification. His-616 acts as the Proton acceptor in catalysis. The segment at residues 641–642 is a cross-link (cysteinyl-selenocysteine (Cys-Sec)); the sequence is CU. A non-standard amino acid (selenocysteine) is located at residue Sec-642.

This sequence belongs to the class-I pyridine nucleotide-disulfide oxidoreductase family. In terms of assembly, homodimer. It depends on FAD as a cofactor.

It localises to the cytoplasm. Its subcellular location is the nucleus. The protein resides in the microsome. It is found in the endoplasmic reticulum. It catalyses the reaction [thioredoxin]-dithiol + NADP(+) = [thioredoxin]-disulfide + NADPH + H(+). Displays thioredoxin reductase, glutaredoxin and glutathione reductase activities. Catalyzes disulfide bond isomerization. Promotes disulfide bond formation between GPX4 and various sperm proteins and may play a role in sperm maturation by promoting formation of sperm structural components. This is Thioredoxin reductase 3 from Homo sapiens (Human).